A 222-amino-acid chain; its full sequence is 7-cyano-7-deazaguanine synthase (222 aa).

Residue 14-24 (FSGGQDSTTCL) coordinates ATP. Zn(2+) is bound by residues cysteine 192, cysteine 201, cysteine 204, and cysteine 207.

The protein belongs to the QueC family. In terms of assembly, homodimer. Zn(2+) serves as cofactor.

The enzyme catalyses 7-carboxy-7-deazaguanine + NH4(+) + ATP = 7-cyano-7-deazaguanine + ADP + phosphate + H2O + H(+). Its pathway is purine metabolism; 7-cyano-7-deazaguanine biosynthesis. Catalyzes the ATP-dependent conversion of 7-carboxy-7-deazaguanine (CDG) to 7-cyano-7-deazaguanine (preQ(0)). The polypeptide is 7-cyano-7-deazaguanine synthase (Clostridium acetobutylicum (strain ATCC 824 / DSM 792 / JCM 1419 / IAM 19013 / LMG 5710 / NBRC 13948 / NRRL B-527 / VKM B-1787 / 2291 / W)).